We begin with the raw amino-acid sequence, 249 residues long: CDP-diacylglycerol pyrophosphatase (249 aa).

The chain crosses the membrane as a helical span at residues 5–25; sequence GYFLLAVIVIVAAAGVGYWKF.

It belongs to the Cdh family.

The protein localises to the cell inner membrane. It catalyses the reaction a CDP-1,2-diacyl-sn-glycerol + H2O = a 1,2-diacyl-sn-glycero-3-phosphate + CMP + 2 H(+). Its pathway is phospholipid metabolism; CDP-diacylglycerol degradation; phosphatidate from CDP-diacylglycerol: step 1/1. This chain is CDP-diacylglycerol pyrophosphatase, found in Salmonella arizonae (strain ATCC BAA-731 / CDC346-86 / RSK2980).